We begin with the raw amino-acid sequence, 151 residues long: uncharacterized protein (151 aa).

This is an uncharacterized protein from Gallid herpesvirus 2 (strain GA) (GaHV-2).